A 314-amino-acid chain; its full sequence is Protoheme IX farnesyltransferase (314 aa).

Transmembrane regions (helical) follow at residues 36 to 56, 65 to 85, 114 to 134, 135 to 155, 179 to 199, 237 to 257, 259 to 279, and 290 to 310; these read IGIV…AISF, WGTF…GCIV, SVLT…MFTS, WYAT…YTIW, WAAI…IMFI, IIVY…TMGI, FAVI…TGLF, and IFIF…IVKL.

The protein belongs to the UbiA prenyltransferase family. Protoheme IX farnesyltransferase subfamily. In terms of assembly, interacts with CtaA.

Its subcellular location is the cell membrane. The catalysed reaction is heme b + (2E,6E)-farnesyl diphosphate + H2O = Fe(II)-heme o + diphosphate. The protein operates within porphyrin-containing compound metabolism; heme O biosynthesis; heme O from protoheme: step 1/1. Functionally, converts heme B (protoheme IX) to heme O by substitution of the vinyl group on carbon 2 of heme B porphyrin ring with a hydroxyethyl farnesyl side group. The polypeptide is Protoheme IX farnesyltransferase (Oceanobacillus iheyensis (strain DSM 14371 / CIP 107618 / JCM 11309 / KCTC 3954 / HTE831)).